Reading from the N-terminus, the 238-residue chain is Probable transcriptional regulatory protein SSU98_0387 (238 aa).

The protein belongs to the TACO1 family. YeeN subfamily.

The protein localises to the cytoplasm. The polypeptide is Probable transcriptional regulatory protein SSU98_0387 (Streptococcus suis (strain 98HAH33)).